The sequence spans 864 residues: Valine--tRNA ligase (864 aa).

The 'HIGH' region signature appears at 42-52 (PTISGKLHIGH). Residues 589 to 593 (KMSKS) carry the 'KMSKS' region motif. K592 serves as a coordination point for ATP.

It belongs to the class-I aminoacyl-tRNA synthetase family. ValS type 2 subfamily. Monomer.

It is found in the cytoplasm. The catalysed reaction is tRNA(Val) + L-valine + ATP = L-valyl-tRNA(Val) + AMP + diphosphate. Catalyzes the attachment of valine to tRNA(Val). As ValRS can inadvertently accommodate and process structurally similar amino acids such as threonine, to avoid such errors, it has a 'posttransfer' editing activity that hydrolyzes mischarged Thr-tRNA(Val) in a tRNA-dependent manner. In Wolbachia pipientis wMel, this protein is Valine--tRNA ligase.